A 271-amino-acid chain; its full sequence is Mannosyl-3-phosphoglycerate phosphatase (271 aa).

The active-site Nucleophile is the aspartate 13. Positions 13, 15, and 214 each coordinate Mg(2+).

It belongs to the HAD-like hydrolase superfamily. MPGP family. The cofactor is Mg(2+).

It is found in the cytoplasm. The catalysed reaction is 2-O-(alpha-D-mannosyl)-3-phosphoglycerate + H2O = (2R)-2-O-(alpha-D-mannosyl)-glycerate + phosphate. This Escherichia coli O81 (strain ED1a) protein is Mannosyl-3-phosphoglycerate phosphatase.